Here is a 274-residue protein sequence, read N- to C-terminus: Pre-rRNA-processing protein PNO1 (274 aa).

Residues 1–70 (MVAPTALKKA…GSRKTHESKT (70 aa)) are disordered. Positions 33–48 (SIDEDDDDDVLLDDSD) are enriched in acidic residues. S47 carries the post-translational modification Phosphoserine. T51 is subject to Phosphothreonine. Residues 51–69 (TAKEEVEGEEGSRKTHESK) show a composition bias toward basic and acidic residues. Residues 195–247 (GDHLSRAIGRIAGKDGKTKFAIENATRTRIVLADSKIHILGGFTHIRMARESV) enclose the KH domain.

The protein belongs to the PNO1 family. Component of the small ribosomal subunit, ribosomal RNA processing complex (SSU RRP complex). Interacts with NOB1.

Its subcellular location is the cytoplasm. The protein resides in the nucleus. It localises to the nucleolus. In terms of biological role, required for small ribosomal subunit (SSU) synthesis. Has a role in the processing of early nucleolar and late cytoplasmic pre-RNA species. Recruits DIM1 to nucleolar pre-RNAs. Indirectly required for cleavage at the A2 site of the 20S pre-rRNA, forming 18S rRNA, and at A1 and A2 sites of other pre-rRNAs. The chain is Pre-rRNA-processing protein PNO1 (PNO1) from Saccharomyces cerevisiae (strain ATCC 204508 / S288c) (Baker's yeast).